A 67-amino-acid polypeptide reads, in one-letter code: Alpha-conotoxin-like Qc1.1b (67 aa).

A signal peptide spans 1-21 (MGMRMMFTMFLLVVLAITVVS). The propeptide occupies 22 to 46 (FTSDHASDGRNTAANDKASKLMALR). Cystine bridges form between C49–C55 and C50–C63. Residues 51-53 (DNP) form a lacks the Ser-Xaa-Pro motif that is crucial for potent interaction with nAChR region.

Belongs to the conotoxin A superfamily. In terms of tissue distribution, expressed by the venom duct.

It is found in the secreted. In terms of biological role, alpha-conotoxins act on postsynaptic membranes, they bind to the nicotinic acetylcholine receptors (nAChR) and thus inhibit them. Has possibly a distinct nAChR binding mode from other alpha-conotoxins, due to a different three residue motif (lacks the Ser-Xaa-Pro motif). This Conus quercinus (Oak cone) protein is Alpha-conotoxin-like Qc1.1b.